The sequence spans 224 residues: UPF0758 protein AHA_0160 (224 aa).

The MPN domain maps to 102 to 224; it reads PLTSPQLTRD…TVSFAERGWL (123 aa). 3 residues coordinate Zn(2+): H173, H175, and D186. Residues 173 to 186 carry the JAMM motif motif; sequence HNHPSGVAEPSRAD.

The protein belongs to the UPF0758 family.

This Aeromonas hydrophila subsp. hydrophila (strain ATCC 7966 / DSM 30187 / BCRC 13018 / CCUG 14551 / JCM 1027 / KCTC 2358 / NCIMB 9240 / NCTC 8049) protein is UPF0758 protein AHA_0160.